The sequence spans 319 residues: Acetyl-coenzyme A carboxylase carboxyl transferase subunit alpha (319 aa).

Residues 32–293 (NVDTEVRALE…KAVLLNELEA (262 aa)) enclose the CoA carboxyltransferase C-terminal domain.

It belongs to the AccA family. As to quaternary structure, acetyl-CoA carboxylase is a heterohexamer composed of biotin carboxyl carrier protein (AccB), biotin carboxylase (AccC) and two subunits each of ACCase subunit alpha (AccA) and ACCase subunit beta (AccD).

The protein localises to the cytoplasm. The enzyme catalyses N(6)-carboxybiotinyl-L-lysyl-[protein] + acetyl-CoA = N(6)-biotinyl-L-lysyl-[protein] + malonyl-CoA. It participates in lipid metabolism; malonyl-CoA biosynthesis; malonyl-CoA from acetyl-CoA: step 1/1. Functionally, component of the acetyl coenzyme A carboxylase (ACC) complex. First, biotin carboxylase catalyzes the carboxylation of biotin on its carrier protein (BCCP) and then the CO(2) group is transferred by the carboxyltransferase to acetyl-CoA to form malonyl-CoA. This Xylella fastidiosa (strain 9a5c) protein is Acetyl-coenzyme A carboxylase carboxyl transferase subunit alpha.